Here is a 365-residue protein sequence, read N- to C-terminus: MTRSYRITLLPGDGIGPEIMAVTVDILRAIGRQFDLNFEFEEALIGGSAIDATGEPLPEATLATCRNSDAVLLAAIGGYKWDSLPRSQRPETGLLGLRAGLGLFANLRPAAILPQLVDASSLKREVIEGVDLMVVRELTGGIYFGEPKGCFADEQGRQRAFNTMVYREDEIDRIGRVAFDIARKRGKRLCSVDKANVLEVSQLWRDRMTLLGSDYADVELSHLYVDNAAMQLVRWPKQFDTIVTGNLFGDILSDIAAMLTGSIGMLPSASLGAEGPGVFEPVHGSAPDIAGQDKANPLAQVLSAAMMLRYGLDEPEAAARIEAAVNQVLDQGYRTGDLYSEGMTLVGCKGMGDALLAALESPVSA.

78 to 91 (GYKWDSLPRSQRPE) contributes to the NAD(+) binding site. Residues R98, R108, R136, and D226 each coordinate substrate. Mg(2+) is bound by residues D226, D250, and D254. Residue 284–296 (GSAPDIAGQDKAN) coordinates NAD(+).

It belongs to the isocitrate and isopropylmalate dehydrogenases family. LeuB type 1 subfamily. Homodimer. Requires Mg(2+) as cofactor. It depends on Mn(2+) as a cofactor.

It is found in the cytoplasm. It catalyses the reaction (2R,3S)-3-isopropylmalate + NAD(+) = 4-methyl-2-oxopentanoate + CO2 + NADH. It functions in the pathway amino-acid biosynthesis; L-leucine biosynthesis; L-leucine from 3-methyl-2-oxobutanoate: step 3/4. Functionally, catalyzes the oxidation of 3-carboxy-2-hydroxy-4-methylpentanoate (3-isopropylmalate) to 3-carboxy-4-methyl-2-oxopentanoate. The product decarboxylates to 4-methyl-2 oxopentanoate. This is 3-isopropylmalate dehydrogenase from Synechococcus elongatus (strain ATCC 33912 / PCC 7942 / FACHB-805) (Anacystis nidulans R2).